We begin with the raw amino-acid sequence, 610 residues long: Replication factor C large subunit (610 aa).

ATP is bound at residue 55-62 (GPAGIGKT). 3 stretches are compositionally biased toward basic and acidic residues: residues 467–478 (EKEGNASAEKPE), 502–515 (LPEK…KLPE), and 594–603 (DGSKKAEPKN). Residues 467 to 610 (EKEGNASAEK…PKNQKTLFDF (144 aa)) are disordered.

The protein belongs to the activator 1 small subunits family. RfcL subfamily. As to quaternary structure, heteromultimer composed of small subunits (RfcS) and large subunits (RfcL).

Functionally, part of the RFC clamp loader complex which loads the PCNA sliding clamp onto DNA. In Methanosarcina mazei (strain ATCC BAA-159 / DSM 3647 / Goe1 / Go1 / JCM 11833 / OCM 88) (Methanosarcina frisia), this protein is Replication factor C large subunit.